Reading from the N-terminus, the 365-residue chain is sn-glycerol-3-phosphate import ATP-binding protein UgpC (365 aa).

The ABC transporter domain occupies 4–234 (LSLRNVQKHY…PASTFVAGFI (231 aa)). An ATP-binding site is contributed by 36–43 (GPSGCGKS).

The protein belongs to the ABC transporter superfamily. sn-glycerol-3-phosphate importer (TC 3.A.1.1.3) family. As to quaternary structure, the complex is composed of two ATP-binding proteins (UgpC), two transmembrane proteins (UgpA and UgpE) and a solute-binding protein (UgpB).

Its subcellular location is the cell inner membrane. The enzyme catalyses sn-glycerol 3-phosphate(out) + ATP + H2O = sn-glycerol 3-phosphate(in) + ADP + phosphate + H(+). In terms of biological role, part of the ABC transporter complex UgpBAEC involved in sn-glycerol-3-phosphate (G3P) import. Responsible for energy coupling to the transport system. In Ralstonia nicotianae (strain ATCC BAA-1114 / GMI1000) (Ralstonia solanacearum), this protein is sn-glycerol-3-phosphate import ATP-binding protein UgpC.